A 273-amino-acid polypeptide reads, in one-letter code: Ribosomal RNA small subunit methyltransferase A (273 aa).

Residues histidine 10, leucine 12, glycine 37, glutamate 58, aspartate 83, and asparagine 108 each contribute to the S-adenosyl-L-methionine site.

This sequence belongs to the class I-like SAM-binding methyltransferase superfamily. rRNA adenine N(6)-methyltransferase family. RsmA subfamily.

Its subcellular location is the cytoplasm. The catalysed reaction is adenosine(1518)/adenosine(1519) in 16S rRNA + 4 S-adenosyl-L-methionine = N(6)-dimethyladenosine(1518)/N(6)-dimethyladenosine(1519) in 16S rRNA + 4 S-adenosyl-L-homocysteine + 4 H(+). Functionally, specifically dimethylates two adjacent adenosines (A1518 and A1519) in the loop of a conserved hairpin near the 3'-end of 16S rRNA in the 30S particle. May play a critical role in biogenesis of 30S subunits. The protein is Ribosomal RNA small subunit methyltransferase A of Picosynechococcus sp. (strain ATCC 27264 / PCC 7002 / PR-6) (Agmenellum quadruplicatum).